Reading from the N-terminus, the 565-residue chain is Protein priB (565 aa).

The segment at residues 20–50 (CTTCRAAKMKCVGAEDGQRQCQRCKRANVQC) is a DNA-binding region (zn(2)-C6 fungal-type). Disordered regions lie at residues 82-170 (AKSK…SDRA) and 195-224 (NPEDAPASGPSSVRCSETYSPPQSPAAPAG). Residues 90–111 (DARHSSSYRDSHPSLGEPDDRY) are compositionally biased toward basic and acidic residues. Positions 129-155 (SNLPPLNLPSYPDAASEYTASSTSSRT) are enriched in low complexity. Polar residues predominate over residues 203 to 215 (GPSSVRCSETYSP).

It is found in the nucleus. The polypeptide is Protein priB (priB) (Lentinula edodes (Shiitake mushroom)).